Here is a 540-residue protein sequence, read N- to C-terminus: Signal peptide peptidase-like 3 (540 aa).

The signal sequence occupies residues 1–28; sequence MSSFDPPNHRYSALVLILLLLGFSVAAA. The Lumenal portion of the chain corresponds to 29-194; it reads DDVSWTEDSS…LYAPKRPAVD (166 aa). A PA domain is found at 98-172; it reads SHLSSRLDGH…ISKSSGDALN (75 aa). N-linked (GlcNAc...) asparagine glycosylation is found at asparagine 155 and asparagine 172. A helical membrane pass occupies residues 195–215; that stretch reads LTAGLLLLMAVGTVVVASLWS. Topologically, residues 216–250 are cytoplasmic; sequence ELTDPDQANESYSILAKDVSSAGTRKDDPEKEILD. A helical membrane pass occupies residues 251 to 273; it reads ISVTGAVFFIVTASIFLLLLFYF. Residues 274–276 are Lumenal-facing; it reads MSS. Residues 277–299 traverse the membrane as a helical segment; that stretch reads WFVWVLTIFFCIGGMQGMHNIIM. Residues 300–321 are Cytoplasmic-facing; sequence AVILRKCRHLARKSVKLPLLGT. Residues 322-342 form a helical membrane-spanning segment; the sequence is MSVLSLLVNIVCLAFAVFWFI. Residues 343–347 lie on the Lumenal side of the membrane; it reads KRHTS. The helical transmembrane segment at 348–368 threads the bilayer; the sequence is YSWVGQDILGICLMITALQVV. At 369 to 377 the chain is on the cytoplasmic side; that stretch reads RLPNIKVAT. A helical transmembrane segment spans residues 378-398; sequence VLLCCAFVYDIFWVFISPLIF. The active site involves aspartate 387. Residues 399–429 lie on the Lumenal side of the membrane; it reads HESVMIVVAQGDSSTGESIPMLLRIPRFFDP. Residues 430–450 traverse the membrane as a helical segment; that stretch reads WGGYDMIGFGDILFPGLLISF. Aspartate 440 is an active-site residue. The Cytoplasmic portion of the chain corresponds to 451–466; the sequence is ASRYDKIKKRVISNGY. Residues 467-487 form a helical membrane-spanning segment; it reads FLWLTIGYGIGLLLTYLGLYL. At 488 to 492 the chain is on the lumenal side; that stretch reads MDGHG. The helical transmembrane segment at 493-513 threads the bilayer; that stretch reads QPALLYIVPCTLGLAVILGLV. Positions 494 to 496 match the PAL motif; it reads PAL. The Cytoplasmic segment spans residues 514–540; sequence RGELKELWNYGIEESESHTPEDPMPVA.

Belongs to the peptidase A22B family. In terms of processing, glycosylated. Ubiquitous.

It localises to the endosome membrane. Intramembrane-cleaving aspartic protease (I-CLiP) that cleaves type II membrane signal peptides in the hydrophobic plane of the membrane. The protein is Signal peptide peptidase-like 3 (SPPL3) of Arabidopsis thaliana (Mouse-ear cress).